Reading from the N-terminus, the 22-residue chain is Bacteriocin serracin-P 23 kDa subunit (22 aa).

Its function is as follows. Major component of a prophage tail tube. In terms of biological role, antibacterial activity against Gram-negative bacterium E.amylovora. The protein is Bacteriocin serracin-P 23 kDa subunit of Serratia plymuthica.